The following is a 388-amino-acid chain: Beta-hexosaminidase LpqI (388 aa).

A signal peptide spans 1 to 19 (MAFPRTLAILAAAAALVVA). A lipid anchor (N-palmitoyl cysteine) is attached at Cys-20. Residue Cys-20 is the site of S-diacylglycerol cysteine attachment. Substrate-binding positions include Asp-123, Arg-131, Arg-193, and 223–224 (KH). The active-site Proton donor/acceptor is the His-236. The Nucleophile role is filled by Asp-311.

It belongs to the glycosyl hydrolase 3 family.

It localises to the cell inner membrane. The catalysed reaction is Hydrolysis of terminal non-reducing N-acetyl-D-hexosamine residues in N-acetyl-beta-D-hexosaminides.. It participates in cell wall biogenesis; peptidoglycan recycling. Plays a role in peptidoglycan recycling by cleaving the terminal beta-1,4-linked N-acetylglucosamine (GlcNAc) from peptidoglycan fragments. Acts as a regulator for GlcNAc-MurNAc levels by cleaving disaccharides and allowing the breakdown of MurNAc. The polypeptide is Beta-hexosaminidase LpqI (Mycobacterium tuberculosis (strain ATCC 25618 / H37Rv)).